The sequence spans 364 residues: NADH-quinone oxidoreductase subunit H (364 aa).

8 consecutive transmembrane segments (helical) span residues 21-41, 88-108, 120-140, 159-179, 208-228, 267-287, 301-321, and 340-360; these read AGQILAVMIWILLSLAFLLLA, VFLLAPLISFTLAFAAWAVIP, VGILYLFAISSLGVYGIIMGG, MVSYEVSIGFIIITVILLAGS, LPLLLVMVPMAVIFFISGLAE, IVLICAMTTILFFGGWSAPFP, FYYFMWFFLKVIFFFFLVSMA, and VFLPFSLVCVALIAAWRVFGP.

The protein belongs to the complex I subunit 1 family. As to quaternary structure, NDH-1 is composed of 14 different subunits. Subunits NuoA, H, J, K, L, M, N constitute the membrane sector of the complex.

The protein resides in the cell inner membrane. The enzyme catalyses a quinone + NADH + 5 H(+)(in) = a quinol + NAD(+) + 4 H(+)(out). In terms of biological role, NDH-1 shuttles electrons from NADH, via FMN and iron-sulfur (Fe-S) centers, to quinones in the respiratory chain. The immediate electron acceptor for the enzyme in this species is believed to be ubiquinone. Couples the redox reaction to proton translocation (for every two electrons transferred, four hydrogen ions are translocated across the cytoplasmic membrane), and thus conserves the redox energy in a proton gradient. This subunit may bind ubiquinone. This chain is NADH-quinone oxidoreductase subunit H, found in Phenylobacterium zucineum (strain HLK1).